A 259-amino-acid chain; its full sequence is 5'-nucleotidase SurE (259 aa).

A divalent metal cation contacts are provided by Asp8, Asp9, Ser40, and Asn92.

The protein belongs to the SurE nucleotidase family. It depends on a divalent metal cation as a cofactor.

The protein localises to the cytoplasm. It catalyses the reaction a ribonucleoside 5'-phosphate + H2O = a ribonucleoside + phosphate. Functionally, nucleotidase that shows phosphatase activity on nucleoside 5'-monophosphates. The protein is 5'-nucleotidase SurE of Xanthomonas axonopodis pv. citri (strain 306).